Reading from the N-terminus, the 252-residue chain is Octanoyltransferase (252 aa).

Positions 56 to 237 constitute a BPL/LPL catalytic domain; sequence ADTGDEIWLV…RLIANLDGAS (182 aa). Substrate contacts are provided by residues 96–103, 168–170, and 181–183; these read RGGQITYH, ALG, and GLS. The active-site Acyl-thioester intermediate is cysteine 199.

Belongs to the LipB family.

Its subcellular location is the cytoplasm. The catalysed reaction is octanoyl-[ACP] + L-lysyl-[protein] = N(6)-octanoyl-L-lysyl-[protein] + holo-[ACP] + H(+). It functions in the pathway protein modification; protein lipoylation via endogenous pathway; protein N(6)-(lipoyl)lysine from octanoyl-[acyl-carrier-protein]: step 1/2. Its function is as follows. Catalyzes the transfer of endogenously produced octanoic acid from octanoyl-acyl-carrier-protein onto the lipoyl domains of lipoate-dependent enzymes. Lipoyl-ACP can also act as a substrate although octanoyl-ACP is likely to be the physiological substrate. The chain is Octanoyltransferase from Burkholderia lata (strain ATCC 17760 / DSM 23089 / LMG 22485 / NCIMB 9086 / R18194 / 383).